Consider the following 321-residue polypeptide: MLNNEYKNSALKIFSLKGNEPLAQEVADHVGIELGKCSVKRFSDGEIQINIEESIRGCDVFIIQPTSNPVNLHLMELLIMIDACRRASAANINIVVPYYGYARQDRKARSREPITAKLVANLIETAGADRMIALDLHAPQIQGFFDMPIDHLMGVPILAQYFKNETDIDPEECVVVSPDHGGVTRARKLADILKTPIAIIDKRRPKPNVAEVMNIVGEIEGRTAIIIDDIIDTAGTITLAAQALKDKGAKDVYACCTHPVLSGPAKERIENSAIKELVVTNSIQLDEKRKPENTKELSVAGLLAQAIIRVYERESVSVLFD.

ATP contacts are provided by residues 44 to 46 and 103 to 104; these read DGE and RQ. Positions 137 and 179 each coordinate Mg(2+). The active site involves K202. D-ribose 5-phosphate is bound by residues R204, D228, and 232–236; that span reads DTAGT.

Belongs to the ribose-phosphate pyrophosphokinase family. Class I subfamily. Homohexamer. Mg(2+) is required as a cofactor.

It localises to the cytoplasm. The catalysed reaction is D-ribose 5-phosphate + ATP = 5-phospho-alpha-D-ribose 1-diphosphate + AMP + H(+). It functions in the pathway metabolic intermediate biosynthesis; 5-phospho-alpha-D-ribose 1-diphosphate biosynthesis; 5-phospho-alpha-D-ribose 1-diphosphate from D-ribose 5-phosphate (route I): step 1/1. Involved in the biosynthesis of the central metabolite phospho-alpha-D-ribosyl-1-pyrophosphate (PRPP) via the transfer of pyrophosphoryl group from ATP to 1-hydroxyl of ribose-5-phosphate (Rib-5-P). This Staphylococcus saprophyticus subsp. saprophyticus (strain ATCC 15305 / DSM 20229 / NCIMB 8711 / NCTC 7292 / S-41) protein is Ribose-phosphate pyrophosphokinase.